The primary structure comprises 622 residues: UvrABC system protein C (622 aa).

Residues 13–92 enclose the GIY-YIG domain; that stretch reads DKPGVYLMKN…IKENRPKYNV (80 aa). The UVR domain occupies 205–240; it reads DELIKKIEEKMKRAAEKMDFEGAAHYRDQRQALLDI.

It belongs to the UvrC family. In terms of assembly, interacts with UvrB in an incision complex.

The protein resides in the cytoplasm. Its function is as follows. The UvrABC repair system catalyzes the recognition and processing of DNA lesions. UvrC both incises the 5' and 3' sides of the lesion. The N-terminal half is responsible for the 3' incision and the C-terminal half is responsible for the 5' incision. The chain is UvrABC system protein C from Alkaliphilus metalliredigens (strain QYMF).